We begin with the raw amino-acid sequence, 287 residues long: Thiazole synthase (287 aa).

The Schiff-base intermediate with DXP role is filled by K111. 1-deoxy-D-xylulose 5-phosphate contacts are provided by residues G172, 203–204 (AG), and 225–226 (NT). The disordered stretch occupies residues 268 to 287 (PQEGVISTRPYGSQADEIGS).

Belongs to the ThiG family. Homotetramer. Forms heterodimers with either ThiH or ThiS.

Its subcellular location is the cytoplasm. It catalyses the reaction [ThiS sulfur-carrier protein]-C-terminal-Gly-aminoethanethioate + 2-iminoacetate + 1-deoxy-D-xylulose 5-phosphate = [ThiS sulfur-carrier protein]-C-terminal Gly-Gly + 2-[(2R,5Z)-2-carboxy-4-methylthiazol-5(2H)-ylidene]ethyl phosphate + 2 H2O + H(+). It functions in the pathway cofactor biosynthesis; thiamine diphosphate biosynthesis. In terms of biological role, catalyzes the rearrangement of 1-deoxy-D-xylulose 5-phosphate (DXP) to produce the thiazole phosphate moiety of thiamine. Sulfur is provided by the thiocarboxylate moiety of the carrier protein ThiS. In vitro, sulfur can be provided by H(2)S. The polypeptide is Thiazole synthase (Rhodopirellula baltica (strain DSM 10527 / NCIMB 13988 / SH1)).